The chain runs to 66 residues: uncharacterized protein (66 aa).

Positions 1–20 are enriched in low complexity; sequence MTIINSISNFGSNNSFSNNN. The disordered stretch occupies residues 1–47; sequence MTIINSISNFGSNNSFSNNNTVNQKSVIKRSKQMKNDNTSIGSSFKN. The span at 36 to 47 shows a compositional bias: polar residues; the sequence is NDNTSIGSSFKN.

This is an uncharacterized protein from Dictyostelium discoideum (Social amoeba).